A 1581-amino-acid polypeptide reads, in one-letter code: Spike glycoprotein (1581 aa).

An N-terminal signal peptide occupies residues 1 to 20 (MFLCFCAATVLCFWINSGGA). The Virion surface segment spans residues 21 to 1551 (DVVPNGTLIF…YNLLPTWITW (1531 aa)). 17 N-linked (GlcNAc...) asparagine; by host glycosylation sites follow: N25, N384, N494, N574, N935, N969, N1267, N1297, N1385, N1389, N1428, N1431, N1438, N1483, N1487, N1495, and N1515. Residues 1552–1572 (LTLGFSLFSIVISGINIILFF) form a helical membrane-spanning segment. At 1573–1581 (EMNGKVKKS) the chain is on the intravirion side.

It belongs to the toroviruses spike protein family. In terms of assembly, homotrimer.

It is found in the virion membrane. Functionally, mediates the binding of virions to the host cell receptor and is involved in membrane fusion. This Berne virus (BEV) protein is Spike glycoprotein (S).